Consider the following 285-residue polypeptide: Formamidopyrimidine-DNA glycosylase (285 aa).

The active-site Schiff-base intermediate with DNA is the P2. E3 serves as the catalytic Proton donor. Catalysis depends on K61, which acts as the Proton donor; for beta-elimination activity. Residues H102, R121, and K163 each contribute to the DNA site. The FPG-type zinc finger occupies 249 to 283 (NAYGQAGKPCARCGTPIARETFMNRGSHFCNRCQK). The active-site Proton donor; for delta-elimination activity is the R273.

It belongs to the FPG family. Monomer. The cofactor is Zn(2+).

The catalysed reaction is Hydrolysis of DNA containing ring-opened 7-methylguanine residues, releasing 2,6-diamino-4-hydroxy-5-(N-methyl)formamidopyrimidine.. It carries out the reaction 2'-deoxyribonucleotide-(2'-deoxyribose 5'-phosphate)-2'-deoxyribonucleotide-DNA = a 3'-end 2'-deoxyribonucleotide-(2,3-dehydro-2,3-deoxyribose 5'-phosphate)-DNA + a 5'-end 5'-phospho-2'-deoxyribonucleoside-DNA + H(+). Its function is as follows. Involved in base excision repair of DNA damaged by oxidation or by mutagenic agents. Acts as a DNA glycosylase that recognizes and removes damaged bases. Has a preference for oxidized purines, such as 7,8-dihydro-8-oxoguanine (8-oxoG). Has AP (apurinic/apyrimidinic) lyase activity and introduces nicks in the DNA strand. Cleaves the DNA backbone by beta-delta elimination to generate a single-strand break at the site of the removed base with both 3'- and 5'-phosphates. The polypeptide is Formamidopyrimidine-DNA glycosylase (Corynebacterium efficiens (strain DSM 44549 / YS-314 / AJ 12310 / JCM 11189 / NBRC 100395)).